Reading from the N-terminus, the 103-residue chain is Urease subunit beta (103 aa).

It belongs to the urease beta subunit family. As to quaternary structure, heterotrimer of UreA (gamma), UreB (beta) and UreC (alpha) subunits. Three heterotrimers associate to form the active enzyme.

It is found in the cytoplasm. The catalysed reaction is urea + 2 H2O + H(+) = hydrogencarbonate + 2 NH4(+). It functions in the pathway nitrogen metabolism; urea degradation; CO(2) and NH(3) from urea (urease route): step 1/1. In Mycobacterium marinum (strain ATCC BAA-535 / M), this protein is Urease subunit beta.